The following is a 477-amino-acid chain: PTS system glucose-specific EIICB component (477 aa).

Positions 1-388 (MFKNVFSSLQ…FNLKTPGREE (388 aa)) constitute a PTS EIIC type-1 domain. 9 helical membrane passes run 20–40 (VSVL…FTLI), 51–71 (TGGS…ALGF), 76–96 (GVAA…LSAV), 112–132 (NFSD…AYMF), 152–172 (FVPI…SLIW), 250–270 (LSGG…AIWH), 280–300 (IGSI…TEPI), 304–324 (FILV…LSFP), and 354–374 (IFLF…IFYF). Residues 399–477 (IEIAPYIVEA…TAIDEYINNI (79 aa)) form the PTS EIIB type-1 domain. C421 serves as the catalytic Phosphocysteine intermediate; for EIIB activity. At C421 the chain carries Phosphocysteine.

It is found in the cell inner membrane. It catalyses the reaction N(pros)-phospho-L-histidyl-[protein] + D-glucose(out) = D-glucose 6-phosphate(in) + L-histidyl-[protein]. Functionally, the phosphoenolpyruvate-dependent sugar phosphotransferase system (sugar PTS), a major carbohydrate active transport system, catalyzes the phosphorylation of incoming sugar substrates concomitantly with their translocation across the cell membrane. The enzyme II complex composed of PtsG and Crr is involved in glucose transport. The polypeptide is PTS system glucose-specific EIICB component (ptsG) (Buchnera aphidicola subsp. Schizaphis graminum (strain Sg)).